We begin with the raw amino-acid sequence, 1044 residues long: Elongation factor 3 (1044 aa).

An HEAT 1 repeat occupies 5–42 (AQSIKVLGELFEKLSVATAENREATATEIASFLNGNII). ADP contacts are provided by Ile42 and His44. The HEAT 2 repeat unit spans residues 45-80 (DVPEEFFKNLTKAVKDKKTAAAALETIAHIANENNL). Ser83 lines the ADP pocket. 6 HEAT repeats span residues 86–123 (PYIV…AIDP), 124–162 (VAIK…AAKT), 166–203 (LRMP…TVDN), 205–241 (DIER…EVTP), 242–279 (ATLS…LVED), and 285–323 (PFLE…VGNV). Residues Thr392, His396, and Glu397 each coordinate ADP. 2 ABC transporter domains span residues 426–641 (DEGE…YYEL) and 667–993 (VKVS…KKED). ADP-binding residues include Asn703, Glu922, Asn925, and His951. Residues 975 to 1044 (GHNWVSGQGS…DAYVSSDDEF (70 aa)) form a disordered region. Positions 987 to 999 (RLEKKEDEGDKFD) are enriched in basic and acidic residues. The segment covering 1009–1031 (NKKKKLSSAELRKKKKERMKKKK) has biased composition (basic residues).

Belongs to the ABC transporter superfamily. ABCF family. EF3 subfamily. Monomer.

Its subcellular location is the cytoplasm. The enzyme catalyses ATP + H2O = ADP + phosphate + H(+). Its pathway is protein biosynthesis; polypeptide chain elongation. Ribosome-dependent ATPase that functions in cytoplasmic translation elongation. Required for the ATP-dependent release of deacylated tRNA from the ribosomal E-site during protein biosynthesis. Stimulates the eEF1A-dependent binding of aminoacyl-tRNA to the ribosomal A-site, which has reduced affinity for tRNA as long as the E-site is occupied. Assists translation termination by stimulating the release of nascent protein from the ribosome by release factors. In Eremothecium gossypii (strain ATCC 10895 / CBS 109.51 / FGSC 9923 / NRRL Y-1056) (Yeast), this protein is Elongation factor 3 (TEF3).